We begin with the raw amino-acid sequence, 1271 residues long: Chitin synthase 4 (1271 aa).

2 disordered regions span residues 1-45 (MPPT…SFDH) and 58-117 (PNHP…ERPS). Residues 21–30 (APDTQESSPA) are compositionally biased toward polar residues. The next 2 membrane-spanning stretches (helical) occupy residues 165–185 (WWIR…LVHL) and 201–221 (LAIF…IIFF). The N-linked (GlcNAc...) asparagine glycan is linked to asparagine 407. The chain crosses the membrane as a helical span at residues 473 to 493 (LLLAFSIILIATIASKFLAAL). N-linked (GlcNAc...) asparagine glycosylation is found at asparagine 713 and asparagine 836. Transmembrane regions (helical) follow at residues 867–887 (LLGT…VIVV), 894–914 (IPVI…LIFI), and 919–939 (FMLI…SVFL). The interval 999 to 1081 (HSESPAPSEK…DKSFIRGSKP (83 aa)) is disordered. The segment covering 1027-1037 (RSPSFHSSASE) has biased composition (polar residues). Residues asparagine 1055 and asparagine 1161 are each glycosylated (N-linked (GlcNAc...) asparagine). Positions 1213-1269 (EVQDEEVLDKLKTWLSKQDLMSVTKRQTREAIYTLFPNAGLQNRAGWLNEQIDKILS) constitute a DEK-C domain.

Belongs to the chitin synthase family.

The protein localises to the cell membrane. It catalyses the reaction [(1-&gt;4)-N-acetyl-beta-D-glucosaminyl](n) + UDP-N-acetyl-alpha-D-glucosamine = [(1-&gt;4)-N-acetyl-beta-D-glucosaminyl](n+1) + UDP + H(+). In terms of biological role, polymerizes chitin, a structural polymer of the cell wall and septum, by transferring the sugar moiety of UDP-GlcNAc to the non-reducing end of the growing chitin polymer. Produces a large proportion of the chitin that is not deacetylated to chitosan. The protein is Chitin synthase 4 of Cryptococcus neoformans var. grubii serotype A (strain H99 / ATCC 208821 / CBS 10515 / FGSC 9487) (Filobasidiella neoformans var. grubii).